Consider the following 156-residue polypeptide: 6,7-dimethyl-8-ribityllumazine synthase (156 aa).

Residues Phe22, 57–59, and 81–83 each bind 5-amino-6-(D-ribitylamino)uracil; these read AYE and TVI. 86 to 87 is a (2S)-2-hydroxy-3-oxobutyl phosphate binding site; it reads GT. Catalysis depends on His89, which acts as the Proton donor. A 5-amino-6-(D-ribitylamino)uracil-binding site is contributed by Phe114. Arg128 is a binding site for (2S)-2-hydroxy-3-oxobutyl phosphate.

The protein belongs to the DMRL synthase family. As to quaternary structure, forms an icosahedral capsid composed of 60 subunits, arranged as a dodecamer of pentamers.

The catalysed reaction is (2S)-2-hydroxy-3-oxobutyl phosphate + 5-amino-6-(D-ribitylamino)uracil = 6,7-dimethyl-8-(1-D-ribityl)lumazine + phosphate + 2 H2O + H(+). It functions in the pathway cofactor biosynthesis; riboflavin biosynthesis; riboflavin from 2-hydroxy-3-oxobutyl phosphate and 5-amino-6-(D-ribitylamino)uracil: step 1/2. Catalyzes the formation of 6,7-dimethyl-8-ribityllumazine by condensation of 5-amino-6-(D-ribitylamino)uracil with 3,4-dihydroxy-2-butanone 4-phosphate. This is the penultimate step in the biosynthesis of riboflavin. The polypeptide is 6,7-dimethyl-8-ribityllumazine synthase (Yersinia pseudotuberculosis serotype O:1b (strain IP 31758)).